The following is a 201-amino-acid chain: MQINLQTDGGGPNRPPFLLPGYPESFPVNDTRPQHTGLEGRIAELIAPGLESIGYELVRVAIMGKQTPTVQIMADRADQTPLSLDDCERISHLVSAVLDVDDPISSAWTLEVSSAGIDRPLTRVKDWNRYAGHLARIDLDVPTASGRKRLTGTVLGADEAQARVKLDSGETVDLPHAHIRRAKLVLTEELIKATETPPAAN.

This sequence belongs to the RimP family.

It localises to the cytoplasm. Functionally, required for maturation of 30S ribosomal subunits. The chain is Ribosome maturation factor RimP from Acidiphilium cryptum (strain JF-5).